The following is a 509-amino-acid chain: ATP synthase subunit alpha (509 aa).

Position 169 to 176 (169 to 176 (GDRQTGKT)) interacts with ATP.

Belongs to the ATPase alpha/beta chains family. As to quaternary structure, F-type ATPases have 2 components, CF(1) - the catalytic core - and CF(0) - the membrane proton channel. CF(1) has five subunits: alpha(3), beta(3), gamma(1), delta(1), epsilon(1). CF(0) has three main subunits: a(1), b(2) and c(9-12). The alpha and beta chains form an alternating ring which encloses part of the gamma chain. CF(1) is attached to CF(0) by a central stalk formed by the gamma and epsilon chains, while a peripheral stalk is formed by the delta and b chains.

The protein localises to the cell inner membrane. It carries out the reaction ATP + H2O + 4 H(+)(in) = ADP + phosphate + 5 H(+)(out). In terms of biological role, produces ATP from ADP in the presence of a proton gradient across the membrane. The alpha chain is a regulatory subunit. This chain is ATP synthase subunit alpha, found in Novosphingobium aromaticivorans (strain ATCC 700278 / DSM 12444 / CCUG 56034 / CIP 105152 / NBRC 16084 / F199).